The primary structure comprises 152 residues: MASARRRRIKKKKQVISKKIEFRYRGYTLEELQQMPLREFAKLLPARQRRTLLRGLTPQQKKLAMKIKKARRLLNKGKEPRIIRTHCRDFVITPDMVGLTFGVYNGKEFVEVKVTPEMIGHYLGEFSLTRKPVQHGAPGMGATRSSMFVPIK.

The protein belongs to the universal ribosomal protein uS19 family.

In terms of biological role, protein S19 forms a complex with S13 that binds strongly to the 16S ribosomal RNA. This Methanocaldococcus jannaschii (strain ATCC 43067 / DSM 2661 / JAL-1 / JCM 10045 / NBRC 100440) (Methanococcus jannaschii) protein is Small ribosomal subunit protein uS19 (rps19).